The sequence spans 282 residues: Proteasome subunit beta (282 aa).

The propeptide at 1–55 is removed in mature form; by autocatalysis; it reads MDNSSTGRYPAASLPPAYLRPGSSSFTDFLRAQAPELLPTARSFPEGSVVQAAHG. Residue Thr-56 is the Nucleophile of the active site.

Belongs to the peptidase T1B family. As to quaternary structure, the 20S proteasome core is composed of 14 alpha and 14 beta subunits that assemble into four stacked heptameric rings, resulting in a barrel-shaped structure. The two inner rings, each composed of seven catalytic beta subunits, are sandwiched by two outer rings, each composed of seven alpha subunits. The catalytic chamber with the active sites is on the inside of the barrel. Has a gated structure, the ends of the cylinder being occluded by the N-termini of the alpha-subunits. Is capped by the proteasome-associated ATPase, ARC.

The protein resides in the cytoplasm. It carries out the reaction Cleavage of peptide bonds with very broad specificity.. It functions in the pathway protein degradation; proteasomal Pup-dependent pathway. With respect to regulation, the formation of the proteasomal ATPase ARC-20S proteasome complex, likely via the docking of the C-termini of ARC into the intersubunit pockets in the alpha-rings, may trigger opening of the gate for substrate entry. Interconversion between the open-gate and close-gate conformations leads to a dynamic regulation of the 20S proteasome proteolysis activity. In terms of biological role, component of the proteasome core, a large protease complex with broad specificity involved in protein degradation. The polypeptide is Proteasome subunit beta (Actinosynnema mirum (strain ATCC 29888 / DSM 43827 / JCM 3225 / NBRC 14064 / NCIMB 13271 / NRRL B-12336 / IMRU 3971 / 101)).